A 513-amino-acid chain; its full sequence is ATP synthase subunit alpha (513 aa).

Residue 169 to 176 participates in ATP binding; that stretch reads GDRQTGKT.

It belongs to the ATPase alpha/beta chains family. As to quaternary structure, F-type ATPases have 2 components, CF(1) - the catalytic core - and CF(0) - the membrane proton channel. CF(1) has five subunits: alpha(3), beta(3), gamma(1), delta(1), epsilon(1). CF(0) has three main subunits: a(1), b(2) and c(9-12). The alpha and beta chains form an alternating ring which encloses part of the gamma chain. CF(1) is attached to CF(0) by a central stalk formed by the gamma and epsilon chains, while a peripheral stalk is formed by the delta and b chains.

The protein resides in the cell inner membrane. The enzyme catalyses ATP + H2O + 4 H(+)(in) = ADP + phosphate + 5 H(+)(out). Produces ATP from ADP in the presence of a proton gradient across the membrane. The alpha chain is a regulatory subunit. This chain is ATP synthase subunit alpha, found in Dichelobacter nodosus (strain VCS1703A).